The sequence spans 439 residues: UDP-N-acetylglucosamine--N-acetylmuramyl-(pentapeptide) pyrophosphoryl-undecaprenol N-acetylglucosamine transferase (439 aa).

Residues 25 to 27 (TGG), Arg218, Ser248, and Gln362 each bind UDP-N-acetyl-alpha-D-glucosamine.

Belongs to the glycosyltransferase 28 family. MurG subfamily.

The protein resides in the cell membrane. The enzyme catalyses di-trans,octa-cis-undecaprenyl diphospho-N-acetyl-alpha-D-muramoyl-L-alanyl-D-glutamyl-meso-2,6-diaminopimeloyl-D-alanyl-D-alanine + UDP-N-acetyl-alpha-D-glucosamine = di-trans,octa-cis-undecaprenyl diphospho-[N-acetyl-alpha-D-glucosaminyl-(1-&gt;4)]-N-acetyl-alpha-D-muramoyl-L-alanyl-D-glutamyl-meso-2,6-diaminopimeloyl-D-alanyl-D-alanine + UDP + H(+). It participates in cell wall biogenesis; peptidoglycan biosynthesis. Functionally, cell wall formation. Catalyzes the transfer of a GlcNAc subunit on undecaprenyl-pyrophosphoryl-MurNAc-pentapeptide (lipid intermediate I) to form undecaprenyl-pyrophosphoryl-MurNAc-(pentapeptide)GlcNAc (lipid intermediate II). In Roseiflexus sp. (strain RS-1), this protein is UDP-N-acetylglucosamine--N-acetylmuramyl-(pentapeptide) pyrophosphoryl-undecaprenol N-acetylglucosamine transferase.